A 239-amino-acid polypeptide reads, in one-letter code: Fatty acid metabolism regulator protein (239 aa).

The HTH gntR-type domain occupies 6–74 (QSPAGFAEEY…HGKPTKVNNF (69 aa)). Positions 34–53 (ERELSELIGVTRTTLREVLQ) form a DNA-binding region, H-T-H motif.

As to quaternary structure, homodimer.

It localises to the cytoplasm. Functionally, multifunctional regulator of fatty acid metabolism. In Klebsiella pneumoniae (strain 342), this protein is Fatty acid metabolism regulator protein.